The chain runs to 273 residues: Large ribosomal subunit protein uL2 (273 aa).

The interval 228-273 (VDHPHGGGEGKTSGGRHPVTPWGFPTKGKKTRKNKRTSKFIVKKRK) is disordered. Residues 254–273 (KGKKTRKNKRTSKFIVKKRK) show a composition bias toward basic residues.

The protein belongs to the universal ribosomal protein uL2 family. In terms of assembly, part of the 50S ribosomal subunit. Forms a bridge to the 30S subunit in the 70S ribosome.

Its function is as follows. One of the primary rRNA binding proteins. Required for association of the 30S and 50S subunits to form the 70S ribosome, for tRNA binding and peptide bond formation. It has been suggested to have peptidyltransferase activity; this is somewhat controversial. Makes several contacts with the 16S rRNA in the 70S ribosome. The protein is Large ribosomal subunit protein uL2 of Rickettsia peacockii (strain Rustic).